The sequence spans 951 residues: Translation initiation factor IF-2 (951 aa).

Disordered regions lie at residues 58–255 (AERK…AVVI) and 305–329 (DVSR…KSLS). Low complexity predominate over residues 101–170 (AEPQYAEPQQ…PQAQPAQPAA (70 aa)). The segment covering 171–216 (PVAPPAPSAQPSAPQPPAAQPRPPQPPMPSRPPPAGYRPAPPPGAR) has biased composition (pro residues). Residues 217 to 234 (PPMSAAPGAPAQPGAAGQ) are compositionally biased toward low complexity. One can recognise a tr-type G domain in the interval 450–619 (IRPPVVTVMG…ALQSEVLELK (170 aa)). The tract at residues 459 to 466 (GHVDHGKT) is G1. GTP is bound at residue 459–466 (GHVDHGKT). Residues 484–488 (GITQH) form a G2 region. The interval 505 to 508 (DTPG) is G3. GTP-binding positions include 505 to 509 (DTPGH) and 559 to 562 (NKVD). The G4 stretch occupies residues 559–562 (NKVD). A G5 region spans residues 595-597 (SAR).

Belongs to the TRAFAC class translation factor GTPase superfamily. Classic translation factor GTPase family. IF-2 subfamily.

The protein localises to the cytoplasm. Its function is as follows. One of the essential components for the initiation of protein synthesis. Protects formylmethionyl-tRNA from spontaneous hydrolysis and promotes its binding to the 30S ribosomal subunits. Also involved in the hydrolysis of GTP during the formation of the 70S ribosomal complex. In Anaeromyxobacter dehalogenans (strain 2CP-1 / ATCC BAA-258), this protein is Translation initiation factor IF-2.